We begin with the raw amino-acid sequence, 128 residues long: Translation initiation factor 5A (128 aa).

Lysine 35 bears the Hypusine mark.

This sequence belongs to the eIF-5A family.

It is found in the cytoplasm. In terms of biological role, functions by promoting the formation of the first peptide bond. The sequence is that of Translation initiation factor 5A (eif5a) from Methanosarcina mazei (strain ATCC BAA-159 / DSM 3647 / Goe1 / Go1 / JCM 11833 / OCM 88) (Methanosarcina frisia).